We begin with the raw amino-acid sequence, 371 residues long: Enterobactin C-glucosyltransferase (371 aa).

This sequence belongs to the glycosyltransferase 28 family.

It localises to the cytoplasm. The catalysed reaction is enterobactin + UDP-alpha-D-glucose = monoglucosyl-enterobactin + UDP. It carries out the reaction monoglucosyl-enterobactin + UDP-alpha-D-glucose = diglucosyl-enterobactin + UDP + H(+). It catalyses the reaction diglucosyl-enterobactin + UDP-alpha-D-glucose = triglucosyl-enterobactin + UDP + H(+). It functions in the pathway siderophore biosynthesis; enterobactin biosynthesis. In terms of biological role, catalyzes the successive monoglucosylation, diglucosylation and triglucosylation of enterobactin (Ent). Transfers glucosyl groups from uridine-5'-diphosphoglucose (UDP-Glc) to C5 of one, two or three of the 2,3-dihydroxybenzoyl (DHB) units of Ent to yield monoglucosyl-C-Ent (MGE), diglucosyl-C-Ent (DGE) and triglucosyl-C-Ent (TGE). Glucosylation decreases the membrane affinity of Ent and increases the iron acquisition rate. The polypeptide is Enterobactin C-glucosyltransferase (Escherichia coli O6:H1 (strain CFT073 / ATCC 700928 / UPEC)).